The sequence spans 388 residues: WD repeat-containing protein 55 (388 aa).

The span at 1–20 (MDPTCEESPAEDSNNEEEDL) shows a compositional bias: acidic residues. The segment at 1–33 (MDPTCEESPAEDSNNEEEDLDSTKAAPRIRDTP) is disordered. WD repeat units lie at residues 37–76 (VLEAPASGLAFHPTRDLLAAGDVDGDVFVFAYSCQEGETK), 83–122 (HHLKSCRAVVFSEDGQKLVTVSKDKAIHILDVEQGQLERR), 126–164 (AHSAPINSVLLVDENALVTGDDTGGIRLWDQRKEGPLMD), 167–206 (QHEEYIADMALDPAKKLLLTASGDGCLGVFNIKRRRFELL), 209–248 (PQSGDLTSVALMKYGKKVACGSSEGTIYLFNWNGFGATSD), 251–290 (ALRAESIDCIVPVTENLLCTGSTDGIIRAVNILPNRVVGT), and 293–333 (QHAG…TVVV). Ser355 is modified (phosphoserine). Residues 364-388 (REDEEDAKAPEEVVRESDDDDDDSD) form a disordered region. The span at 370 to 379 (AKAPEEVVRE) shows a compositional bias: basic and acidic residues.

Belongs to the WD repeat WDR55 family.

Its subcellular location is the nucleus. It localises to the nucleolus. It is found in the cytoplasm. Nucleolar protein that acts as a modulator of rRNA synthesis. Plays a central role during organogenesis. The protein is WD repeat-containing protein 55 (Wdr55) of Mus musculus (Mouse).